Consider the following 353-residue polypeptide: Ferredoxin--NADP reductase (353 aa).

D33, Q41, Y46, V86, F121, D293, and T333 together coordinate FAD.

Belongs to the ferredoxin--NADP reductase type 2 family. Homodimer. It depends on FAD as a cofactor.

It carries out the reaction 2 reduced [2Fe-2S]-[ferredoxin] + NADP(+) + H(+) = 2 oxidized [2Fe-2S]-[ferredoxin] + NADPH. This is Ferredoxin--NADP reductase from Verminephrobacter eiseniae (strain EF01-2).